Here is a 397-residue protein sequence, read N- to C-terminus: MKVLVVNAGSSSIKYQVVDMTDESVLAVGLVDRVGIPGTTLDHSPLGKDKVTIKKDLPDHTAGMELVLQVLVNEEYGCIKSMDEIGAVGHRVVHGGEGFAESVVIDDEVKRVIKECFEIAPLHNPPNMMGIEACQRLMPNVKHVAVFDTAFHQTMGPANFMYALPYDVYEKFRVRRYGFHGTSHFYVAHRAAEMLGKPYEECKIITLHLGNGASMAAIKDGKVIDTSMGFTPLEGLVMGTRSGDIDPAIVFFLMDKLGMNSSEANNYFNKKSGMLGLSGVSNDLRDILEAAGSGNERAKIALDVYYNKVKGYIGNYIAKLNGVDCLVFTAGVGENAIDIRENVCANLDYLGIKMDVEKNKVRGKEVDVATADSKVRIFLIPTNEELVIARDTFNLAK.

N7 contributes to the Mg(2+) binding site. K14 contributes to the ATP binding site. Position 91 (R91) interacts with substrate. D148 (proton donor/acceptor) is an active-site residue. ATP is bound by residues 208-212, 283-285, and 331-335; these read HLGNG, DLR, and GVGEN. E384 contributes to the Mg(2+) binding site.

Belongs to the acetokinase family. As to quaternary structure, homodimer. It depends on Mg(2+) as a cofactor. The cofactor is Mn(2+).

It is found in the cytoplasm. The enzyme catalyses acetate + ATP = acetyl phosphate + ADP. Its pathway is metabolic intermediate biosynthesis; acetyl-CoA biosynthesis; acetyl-CoA from acetate: step 1/2. Catalyzes the formation of acetyl phosphate from acetate and ATP. Can also catalyze the reverse reaction. The polypeptide is Acetate kinase (Syntrophomonas wolfei subsp. wolfei (strain DSM 2245B / Goettingen)).